A 306-amino-acid chain; its full sequence is Nucleotide-binding protein MUL_1815 (306 aa).

29–36 (GLSGAGRG) provides a ligand contact to ATP. 80 to 83 (DVRS) is a GTP binding site.

The protein belongs to the RapZ-like family.

Functionally, displays ATPase and GTPase activities. This chain is Nucleotide-binding protein MUL_1815, found in Mycobacterium ulcerans (strain Agy99).